The chain runs to 170 residues: Putative beta-eliminating lyase-like protein (170 aa).

The residue at position 32 (lysine 32) is an N6-(pyridoxal phosphate)lysine.

It belongs to the beta-eliminating lyase family. Pyridoxal 5'-phosphate is required as a cofactor.

The chain is Putative beta-eliminating lyase-like protein from Dictyostelium discoideum (Social amoeba).